The chain runs to 279 residues: Ribosomal RNA small subunit methyltransferase A (279 aa).

Residues histidine 12, leucine 14, glycine 39, glutamate 60, aspartate 81, and asparagine 118 each contribute to the S-adenosyl-L-methionine site.

Belongs to the class I-like SAM-binding methyltransferase superfamily. rRNA adenine N(6)-methyltransferase family. RsmA subfamily.

The protein resides in the cytoplasm. The catalysed reaction is adenosine(1518)/adenosine(1519) in 16S rRNA + 4 S-adenosyl-L-methionine = N(6)-dimethyladenosine(1518)/N(6)-dimethyladenosine(1519) in 16S rRNA + 4 S-adenosyl-L-homocysteine + 4 H(+). Specifically dimethylates two adjacent adenosines (A1518 and A1519) in the loop of a conserved hairpin near the 3'-end of 16S rRNA in the 30S particle. May play a critical role in biogenesis of 30S subunits. The sequence is that of Ribosomal RNA small subunit methyltransferase A from Polaromonas naphthalenivorans (strain CJ2).